A 134-amino-acid chain; its full sequence is Small ribosomal subunit protein uS8 (134 aa).

Belongs to the universal ribosomal protein uS8 family. Part of the 30S ribosomal subunit. Contacts proteins S5 and S12.

One of the primary rRNA binding proteins, it binds directly to 16S rRNA central domain where it helps coordinate assembly of the platform of the 30S subunit. The sequence is that of Small ribosomal subunit protein uS8 from Sphingopyxis alaskensis (strain DSM 13593 / LMG 18877 / RB2256) (Sphingomonas alaskensis).